Here is a 419-residue protein sequence, read N- to C-terminus: UDP-N-acetylglucosamine 1-carboxyvinyltransferase (419 aa).

22-23 (KN) serves as a coordination point for phosphoenolpyruvate. Residue R95 coordinates UDP-N-acetyl-alpha-D-glucosamine. The active-site Proton donor is C119. Position 119 is a 2-(S-cysteinyl)pyruvic acid O-phosphothioketal (C119). UDP-N-acetyl-alpha-D-glucosamine contacts are provided by residues 164 to 167 (KVSV), D308, and I330.

The protein belongs to the EPSP synthase family. MurA subfamily.

It is found in the cytoplasm. It catalyses the reaction phosphoenolpyruvate + UDP-N-acetyl-alpha-D-glucosamine = UDP-N-acetyl-3-O-(1-carboxyvinyl)-alpha-D-glucosamine + phosphate. Its pathway is cell wall biogenesis; peptidoglycan biosynthesis. Functionally, cell wall formation. Adds enolpyruvyl to UDP-N-acetylglucosamine. This chain is UDP-N-acetylglucosamine 1-carboxyvinyltransferase, found in Rickettsia rickettsii (strain Iowa).